Consider the following 177-residue polypeptide: Thymidine kinase (177 aa).

Position 11–18 (11–18 (GPMLSGKS)) interacts with ATP. Glu83 (proton acceptor) is an active-site residue. Phe113 contributes to the substrate binding site. Zn(2+)-binding residues include Cys138 and Cys141. 157 to 161 (IEIIG) lines the substrate pocket. Zn(2+) contacts are provided by Cys170 and Cys173.

Belongs to the thymidine kinase family. As to quaternary structure, homotetramer. Two molecules of substrate bind to each enzyme tetramer.

It catalyses the reaction thymidine + ATP = dTMP + ADP + H(+). Its function is as follows. Phosphorylates thymidine and thymidine analogs, such as azidothymidine (AZT). Part of the salvage pathway for pyrimidine deoxyribonucleotide synthesis. The sequence is that of Thymidine kinase (OPG101) from Monkeypox virus (strain Zaire-96-I-16) (MPX).